Reading from the N-terminus, the 359-residue chain is N-acetyl-gamma-glutamyl-phosphate reductase (359 aa).

Cys162 is a catalytic residue.

Belongs to the NAGSA dehydrogenase family. Type 1 subfamily.

It is found in the cytoplasm. The catalysed reaction is N-acetyl-L-glutamate 5-semialdehyde + phosphate + NADP(+) = N-acetyl-L-glutamyl 5-phosphate + NADPH + H(+). It participates in amino-acid biosynthesis; L-arginine biosynthesis; N(2)-acetyl-L-ornithine from L-glutamate: step 3/4. In terms of biological role, catalyzes the NADPH-dependent reduction of N-acetyl-5-glutamyl phosphate to yield N-acetyl-L-glutamate 5-semialdehyde. The chain is N-acetyl-gamma-glutamyl-phosphate reductase from Prochlorococcus marinus (strain NATL1A).